Reading from the N-terminus, the 209-residue chain is DNA transformation protein TfoX1 (209 aa).

Belongs to the Sxy/TfoX family.

Its function is as follows. Required for DNA transformation jointly with TfoY (tfoX2). This Aliivibrio fischeri (strain ATCC 700601 / ES114) (Vibrio fischeri) protein is DNA transformation protein TfoX1.